A 235-amino-acid polypeptide reads, in one-letter code: Phosphoribosylaminoimidazole-succinocarboxamide synthase (235 aa).

Belongs to the SAICAR synthetase family.

The enzyme catalyses 5-amino-1-(5-phospho-D-ribosyl)imidazole-4-carboxylate + L-aspartate + ATP = (2S)-2-[5-amino-1-(5-phospho-beta-D-ribosyl)imidazole-4-carboxamido]succinate + ADP + phosphate + 2 H(+). Its pathway is purine metabolism; IMP biosynthesis via de novo pathway; 5-amino-1-(5-phospho-D-ribosyl)imidazole-4-carboxamide from 5-amino-1-(5-phospho-D-ribosyl)imidazole-4-carboxylate: step 1/2. This is Phosphoribosylaminoimidazole-succinocarboxamide synthase from Streptococcus pneumoniae (strain JJA).